The chain runs to 177 residues: KxDL motif-containing protein 1 (177 aa).

Position 1 is an N-acetylmethionine (Met-1). Residues 92–177 (ARQHPEAFSH…TDDEEETREE (86 aa)) are disordered. The segment covering 119 to 145 (SITTTIATSEQSTGSCDTSPDTASPSF) has biased composition (polar residues).

Belongs to the KXD1 family. As to quaternary structure, component of the BLOC-one-related complex (BORC) which is composed of BLOC1S1, BLOC1S2, BORCS5, BORCS6, BORCS7, BORCS8, KXD1 and SNAPIN. Associates with the BLOC-1 complex. Interacts with BLOC1S1. Interacts with DTNBP1/BLOC1S7 (via coiled-coil domain).

The protein localises to the lysosome membrane. In terms of biological role, as part of the BORC complex may play a role in lysosomes movement and localization at the cell periphery. Associated with the cytosolic face of lysosomes, the BORC complex may recruit ARL8B and couple lysosomes to microtubule plus-end-directed kinesin motor. May also be involved in the biogenesis of lysosome-related organelles such as melanosomes. The chain is KxDL motif-containing protein 1 (Kxd1) from Rattus norvegicus (Rat).